The primary structure comprises 36 residues: Delta-amaurobitoxin-Pl1c (36 aa).

4 cysteine pairs are disulfide-bonded: cysteine 3/cysteine 19, cysteine 10/cysteine 24, cysteine 18/cysteine 34, and cysteine 26/cysteine 32.

Expressed by the venom gland.

Its subcellular location is the secreted. In terms of biological role, binds at site 4 of sodium channels (Nav) and inhibits the fast inactivation of cockroach channels. This toxin is active only on insects. Has a potent activity against S.litura larvae. The sequence is that of Delta-amaurobitoxin-Pl1c from Pireneitega luctuosa (Tangled nest spider).